Here is a 338-residue protein sequence, read N- to C-terminus: Taste receptor type 2 member 39 (338 aa).

Residues Met1–Ser30 lie on the Extracellular side of the membrane. Residues Pro31 to Ala51 form a helical membrane-spanning segment. At Asn52 to Arg74 the chain is on the cytoplasmic side. The helical transmembrane segment at Ile75 to Thr95 threads the bilayer. At Ile96–Ser116 the chain is on the extracellular side. Residues Phe117–Val137 traverse the membrane as a helical segment. Topologically, residues Lys138–Gly156 are cytoplasmic. Residues Leu157–Ile177 form a helical membrane-spanning segment. At Asn178–Asn205 the chain is on the extracellular side. Asn185 and Asn194 each carry an N-linked (GlcNAc...) asparagine glycan. A helical membrane pass occupies residues Val206–Leu226. Over Thr227 to Lys262 the chain is Cytoplasmic. Residues Ala263–Ser283 traverse the membrane as a helical segment. Residues Asn284–Leu291 are Extracellular-facing. Residues Trp292 to Ile312 form a helical membrane-spanning segment. The Cytoplasmic portion of the chain corresponds to Gln313–Leu338.

Belongs to the G-protein coupled receptor T2R family. As to expression, expressed in subsets of taste receptor cells of the tongue and exclusively in gustducin-positive cells.

It localises to the membrane. Its function is as follows. Receptor that may play a role in the perception of bitterness and is gustducin-linked. May play a role in sensing the chemical composition of the gastrointestinal content. The activity of this receptor may stimulate alpha gustducin, mediate PLC-beta-2 activation and lead to the gating of TRPM5. In Homo sapiens (Human), this protein is Taste receptor type 2 member 39 (TAS2R39).